The following is a 608-amino-acid chain: Granule-bound starch synthase 1, chloroplastic/amyloplastic (608 aa).

The N-terminal 78 residues, methionine 1 to cysteine 78, are a transit peptide targeting the chloroplast. Lysine 96 lines the ADP-alpha-D-glucose pocket. Residues glycine 587–proline 608 form a disordered region.

This sequence belongs to the glycosyltransferase 1 family. Bacterial/plant glycogen synthase subfamily. In terms of tissue distribution, synthesized in a number of different organs, but most abundantly in tubers.

The protein resides in the plastid. It localises to the chloroplast. The protein localises to the amyloplast. The enzyme catalyses an NDP-alpha-D-glucose + [(1-&gt;4)-alpha-D-glucosyl](n) = [(1-&gt;4)-alpha-D-glucosyl](n+1) + a ribonucleoside 5'-diphosphate + H(+). It participates in glycan biosynthesis; starch biosynthesis. Functionally, responsible for the synthesis of amylose in reserve starch. In Manihot esculenta (Cassava), this protein is Granule-bound starch synthase 1, chloroplastic/amyloplastic (WAXY).